The following is a 140-amino-acid chain: Heavy metal-associated isoprenylated plant protein 31 (140 aa).

The 65-residue stretch at 3-67 (MTVEIRVPNL…AVRRAGKAAE (65 aa)) folds into the HMA domain. Positions 14 and 17 each coordinate a metal cation. The residue at position 137 (cysteine 137) is a Cysteine methyl ester. Residue cysteine 137 is the site of S-farnesyl cysteine attachment. A propeptide spans 138 to 140 (TIM) (removed in mature form).

Belongs to the HIPP family.

In terms of biological role, heavy-metal-binding protein. The chain is Heavy metal-associated isoprenylated plant protein 31 from Arabidopsis thaliana (Mouse-ear cress).